A 166-amino-acid polypeptide reads, in one-letter code: uncharacterized protein (166 aa).

Functionally, this protein may be involved in virus assembly. Essential for virus function. This is an uncharacterized protein from Sulfolobus spindle-shape virus 1 (SSV1).